The following is a 537-amino-acid chain: Lysine--tRNA ligase (537 aa).

The short motif at 30 to 38 (PSGNIHIGN) is the 'HIGH' region element. A 'KMSKS' region motif is present at residues 276–280 (AMSSS).

It belongs to the class-I aminoacyl-tRNA synthetase family.

The protein resides in the cytoplasm. The enzyme catalyses tRNA(Lys) + L-lysine + ATP = L-lysyl-tRNA(Lys) + AMP + diphosphate. This chain is Lysine--tRNA ligase, found in Methanosarcina barkeri (strain Fusaro / DSM 804).